A 128-amino-acid polypeptide reads, in one-letter code: uncharacterized protein (128 aa).

A disulfide bridge connects residues C10 and C13.

Belongs to the ArsC family.

This is an uncharacterized protein from Ureaplasma parvum serovar 3 (strain ATCC 700970).